Here is a 349-residue protein sequence, read N- to C-terminus: tRNA pseudouridine synthase D (349 aa).

Phenylalanine 26 lines the substrate pocket. The active-site Nucleophile is aspartate 79. Asparagine 128 provides a ligand contact to substrate. Positions 154 to 302 constitute a TRUD domain; that stretch reads GVPNYFGSQR…VEGSRRAVLL (149 aa). Phenylalanine 328 lines the substrate pocket.

The protein belongs to the pseudouridine synthase TruD family.

It carries out the reaction uridine(13) in tRNA = pseudouridine(13) in tRNA. Functionally, responsible for synthesis of pseudouridine from uracil-13 in transfer RNAs. This is tRNA pseudouridine synthase D from Yersinia pseudotuberculosis serotype IB (strain PB1/+).